The following is a 29-amino-acid chain: Cyclotide mobo-B (29 aa).

A cross-link (cyclopeptide (Gly-Asn)) is located at residues 1-29 (GKPICGETCAKGKCYTPKCTCNWPICYKN). Intrachain disulfides connect Cys5-Cys19, Cys9-Cys21, and Cys14-Cys26.

Belongs to the cyclotide family. This is a cyclic peptide.

Its function is as follows. Probably participates in a plant defense mechanism. The chain is Cyclotide mobo-B from Melicytus obovatus (Hymenanthera obovata).